A 275-amino-acid polypeptide reads, in one-letter code: Homeobox protein Hox-C12a (275 aa).

2 disordered regions span residues 101-129 (SREN…DHGM) and 148-213 (QLTQ…KRKP). Low complexity predominate over residues 155–177 (SCQSMESDSSSSLLNEASKPSSS). Polar residues predominate over residues 178-194 (DTQTLVSPGSHTGTITA). Positions 207 to 266 (TRKKRKPYSKLQLAELEGEFMMNEFITRQRRRELSDRLNLSDQQVKIWFQNRRMKKKRLM) form a DNA-binding region, homeobox.

It belongs to the Abd-B homeobox family.

It localises to the nucleus. In terms of biological role, sequence-specific transcription factor which is part of a developmental regulatory system that provides cells with specific positional identities on the anterior-posterior axis. The polypeptide is Homeobox protein Hox-C12a (hoxc12a) (Takifugu rubripes (Japanese pufferfish)).